Here is a 101-residue protein sequence, read N- to C-terminus: MIPGELLPQDGDLELNAGRPTLTVTVANTGDRPVQIGSHYHFHEVNDALRFDREATRGYRLNIAAGTAVRFEPGQERTVELVALAGDRVVYGFAGRVMGKL.

It belongs to the urease beta subunit family. In terms of assembly, heterotrimer of UreA (gamma), UreB (beta) and UreC (alpha) subunits. Three heterotrimers associate to form the active enzyme.

It is found in the cytoplasm. It carries out the reaction urea + 2 H2O + H(+) = hydrogencarbonate + 2 NH4(+). The protein operates within nitrogen metabolism; urea degradation; CO(2) and NH(3) from urea (urease route): step 1/1. The sequence is that of Urease subunit beta from Ralstonia nicotianae (strain ATCC BAA-1114 / GMI1000) (Ralstonia solanacearum).